Consider the following 503-residue polypeptide: Splicing factor 3A subunit 3 (503 aa).

2 disordered regions span residues 296 to 317 (PALM…EHER) and 341 to 384 (ATKE…NPKN). Positions 358–377 (DDSDVEASESDNEDDPDADD) are enriched in acidic residues. Phosphoserine occurs at positions 360, 365, and 367. The segment at 408–439 (YNCEICGNFTYKGPKAFQRHFAEWRHAHGMRC) adopts a Matrin-type zinc-finger fold.

The protein belongs to the SF3A3 family. Probable component of a the U2 small nuclear ribonucleoproteins complex (U2 snRNP). In terms of tissue distribution, ubiquitous. In ovaries and testes, it is expressed in all germ and somatic cells. Highly expressed in spermatogonias and spermatocytes. Highly expressed in the germ cells of larval testes, while it is weakly expressed in fat body cells, in polyploid nuclei of salivary glands, and in larval brain.

The protein resides in the nucleus. Functionally, probable subunit of a splicing factor complex required for 'A' complex assembly formed by the stable binding of U2 snRNP to the branchpoint sequence (BPS) in pre-mRNA. Involved in male fertility. This Drosophila melanogaster (Fruit fly) protein is Splicing factor 3A subunit 3 (noi).